A 438-amino-acid chain; its full sequence is Serine carboxypeptidase-like 5 (438 aa).

The signal sequence occupies residues 1–28; the sequence is MANYISSVLKSLLLLLHLVFLIQQHVDS. 3 disulfides stabilise this stretch: cysteine 87-cysteine 328, cysteine 251-cysteine 263, and cysteine 287-cysteine 294. The N-linked (GlcNAc...) asparagine glycan is linked to asparagine 108. Residue serine 183 is part of the active site. Asparagine 347 carries N-linked (GlcNAc...) asparagine glycosylation. The active site involves aspartate 363. Asparagine 379 carries N-linked (GlcNAc...) asparagine glycosylation. Histidine 416 is an active-site residue.

Belongs to the peptidase S10 family. In terms of tissue distribution, expressed in seedlings, roots, and siliques.

The protein resides in the secreted. Its function is as follows. Probable carboxypeptidase. The protein is Serine carboxypeptidase-like 5 (SCPL5) of Arabidopsis thaliana (Mouse-ear cress).